Here is a 455-residue protein sequence, read N- to C-terminus: Ribulose bisphosphate carboxylase large chain (455 aa).

At lysine 5 the chain carries N6,N6,N6-trimethyllysine. Residues asparagine 114 and threonine 164 each contribute to the substrate site. Lysine 166 (proton acceptor) is an active-site residue. Lysine 168 is a binding site for substrate. Mg(2+)-binding residues include lysine 192, aspartate 194, and glutamate 195. At lysine 192 the chain carries N6-carboxylysine. Histidine 285 (proton acceptor) is an active-site residue. The substrate site is built by arginine 286, histidine 318, and serine 370.

This sequence belongs to the RuBisCO large chain family. Type I subfamily. As to quaternary structure, heterohexadecamer of 8 large chains and 8 small chains; disulfide-linked. The disulfide link is formed within the large subunit homodimers. Mg(2+) serves as cofactor. In terms of processing, the disulfide bond which can form in the large chain dimeric partners within the hexadecamer appears to be associated with oxidative stress and protein turnover.

The protein localises to the plastid. It is found in the chloroplast. The enzyme catalyses 2 (2R)-3-phosphoglycerate + 2 H(+) = D-ribulose 1,5-bisphosphate + CO2 + H2O. The catalysed reaction is D-ribulose 1,5-bisphosphate + O2 = 2-phosphoglycolate + (2R)-3-phosphoglycerate + 2 H(+). In terms of biological role, ruBisCO catalyzes two reactions: the carboxylation of D-ribulose 1,5-bisphosphate, the primary event in carbon dioxide fixation, as well as the oxidative fragmentation of the pentose substrate in the photorespiration process. Both reactions occur simultaneously and in competition at the same active site. In Erythrina crista-galli (Cockspur coral tree), this protein is Ribulose bisphosphate carboxylase large chain.